Reading from the N-terminus, the 708-residue chain is MSQYTEKEPAAMDQESGKAVWPKPAGGYQTITGRRYGRRHAYVSFKPCMTRHERSLGRAGDDYEVLELDDVPKENSSGSSPLDQVDSSLPNEPIFEKSETEIPTCGSALNPTTESSQSFVAVHHSEEGRDTLGSSTNLHNHSEGEYTPGACNASGVQNGIALVHTDSYDPDGKHGEDNDRLQLSAEVVEGSRYQESSGNTLFELENREAEAYTGLSPPVPSFNCEVRDEFEGLDSVPLVKSSAGDTEFVHQNSQEIQRSSQDEMVSTKQQNNTSQERQTEHSPEDSACGPGRICSEQNTNDREKNHGSSPEQVVRPKVRKLISSSQVDQETGFNRHEAKQRSVQRWREALEVEESGSDDLLIKCEEYDGEHDCMFLDPPYSRVITQRETENNQVTPESGATAGRQEVDNPFWNGCGDYYQLYDKDEDSSECSDGEWSASLPHRFSGTEKDQSSSDESWETLPGKDENEPELQSDSSGPEEENQELSLQEGEQTSLEEGEIPWLQYNEVNESSSDEGNEPANEFAQPAFMLDGNNNLEDDSSVSEDLDVDWSLFDGFADGLGVAEAISYVDPQFLTYMALEERLAQAMETALAHLESLAVDVEVANPPASKESIDGLPETLVLEDHTAIGQEQCCPICCSEYIKDDIATELPCHHFFHKPCVSIWLQKSGTCPVCRRHFPPAVIEASAAPSSEPDPDAPPSNDSIAEAP.

Basic and acidic residues predominate over residues 1–10 (MSQYTEKEPA). Disordered stretches follow at residues 1-30 (MSQY…GYQT) and 53-90 (ERSL…SSLP). S2 bears the N-acetylserine mark. Residues 74 to 90 (ENSSGSSPLDQVDSSLP) are compositionally biased toward polar residues. At S196 the chain carries Phosphoserine. 3 disordered regions span residues 244-342 (GDTE…KQRS), 385-411 (TQRE…DNPF), and 425-495 (DEDS…QTSL). Residue T246 is modified to Phosphothreonine. The segment covering 249–276 (VHQNSQEIQRSSQDEMVSTKQQNNTSQE) has biased composition (polar residues). Phosphoserine occurs at positions 253, 309, and 323. Over residues 322–332 (ISSSQVDQETG) the composition is skewed to polar residues. The span at 333 to 342 (FNRHEAKQRS) shows a compositional bias: basic and acidic residues. S342 is modified (phosphoserine; by PKA). The residue at position 389 (T389) is a Phosphothreonine; by PKA. S432 is modified (phosphoserine). Acidic residues predominate over residues 467 to 483 (NEPELQSDSSGPEEENQ). Over residues 484 to 493 (ELSLQEGEQT) the composition is skewed to polar residues. The interval 531 to 708 (DGNNNLEDDS…PSNDSIAEAP (178 aa)) is interaction with PRKAR1A, PRKAR2A and PRKAR2B. Residues 550-570 (WSLFDGFADGLGVAEAISYVD) are mediates interaction with TBC1D31. The RING-type; atypical zinc finger occupies 634-675 (CPICCSEYIKDDIATELPCHHFFHKPCVSIWLQKSGTCPVCR). Residues 685-708 (ASAAPSSEPDPDAPPSNDSIAEAP) are disordered. Residues 699-708 (PSNDSIAEAP) show a composition bias toward low complexity.

Binds ubiquitin-conjugating enzymes (E2s). In vitro, interacts with the ubiquitin-conjugating enzyme, UBE2D2. The phosphorylated form interacts with PRKAR1A, PRKAR2A and PRKAR2B. Binds the catalytic subunits of cAMP-dependent protein kinase. Interacts with MFHAS1. Interacts with TBC1D31; the interaction is direct and recruits PJA2 to centrosomes.

Its subcellular location is the cytoplasm. It localises to the cell membrane. The protein localises to the endoplasmic reticulum membrane. The protein resides in the golgi apparatus membrane. It is found in the synapse. Its subcellular location is the postsynaptic density. It localises to the cytoskeleton. The protein localises to the microtubule organizing center. The protein resides in the centrosome. It carries out the reaction S-ubiquitinyl-[E2 ubiquitin-conjugating enzyme]-L-cysteine + [acceptor protein]-L-lysine = [E2 ubiquitin-conjugating enzyme]-L-cysteine + N(6)-ubiquitinyl-[acceptor protein]-L-lysine.. Its pathway is protein modification; protein ubiquitination. Its function is as follows. Has E2-dependent E3 ubiquitin-protein ligase activity. Responsible for ubiquitination of cAMP-dependent protein kinase type I and type II-alpha/beta regulatory subunits and for targeting them for proteasomal degradation. Essential for PKA-mediated long-term memory processes. Through the ubiquitination of MFHAS1, positively regulates the TLR2 signaling pathway that leads to the activation of the downstream p38 and JNK MAP kinases and promotes the polarization of macrophages toward the pro-inflammatory M1 phenotype. Plays a role in ciliogenesis by ubiquitinating OFD1. The sequence is that of E3 ubiquitin-protein ligase Praja-2 (PJA2) from Pongo abelii (Sumatran orangutan).